The sequence spans 133 residues: Small ribosomal subunit protein eS24y (133 aa).

A disordered region spans residues 104–133; that stretch reads KSRKQIKERKNRAKKIRGVKKTKAGDTKKK. Residues 109-125 are compositionally biased toward basic residues; it reads IKERKNRAKKIRGVKKT.

It belongs to the eukaryotic ribosomal protein eS24 family.

The protein is Small ribosomal subunit protein eS24y (RPS24B) of Arabidopsis thaliana (Mouse-ear cress).